A 188-amino-acid polypeptide reads, in one-letter code: Elongation factor P (188 aa).

This sequence belongs to the elongation factor P family.

It is found in the cytoplasm. It functions in the pathway protein biosynthesis; polypeptide chain elongation. Its function is as follows. Involved in peptide bond synthesis. Stimulates efficient translation and peptide-bond synthesis on native or reconstituted 70S ribosomes in vitro. Probably functions indirectly by altering the affinity of the ribosome for aminoacyl-tRNA, thus increasing their reactivity as acceptors for peptidyl transferase. The polypeptide is Elongation factor P (Rickettsia rickettsii (strain Iowa)).